The primary structure comprises 67 residues: Probable Sec-independent protein translocase protein TatE (67 aa).

Residues Ile-4–Gly-21 form a helical membrane-spanning segment.

The protein belongs to the TatA/E family. TatE subfamily.

It is found in the cell inner membrane. Functionally, part of the twin-arginine translocation (Tat) system that transports large folded proteins containing a characteristic twin-arginine motif in their signal peptide across membranes. TatE shares overlapping functions with TatA. The chain is Probable Sec-independent protein translocase protein TatE from Salmonella arizonae (strain ATCC BAA-731 / CDC346-86 / RSK2980).